Consider the following 362-residue polypeptide: UDP-N-acetylglucosamine--N-acetylmuramyl-(pentapeptide) pyrophosphoryl-undecaprenol N-acetylglucosamine transferase (362 aa).

UDP-N-acetyl-alpha-D-glucosamine-binding positions include 15–17 (TGG), Asn-127, Arg-165, Ser-191, Ile-247, 266–271 (ALTVSE), and Gln-292.

This sequence belongs to the glycosyltransferase 28 family. MurG subfamily.

It localises to the cell inner membrane. It carries out the reaction di-trans,octa-cis-undecaprenyl diphospho-N-acetyl-alpha-D-muramoyl-L-alanyl-D-glutamyl-meso-2,6-diaminopimeloyl-D-alanyl-D-alanine + UDP-N-acetyl-alpha-D-glucosamine = di-trans,octa-cis-undecaprenyl diphospho-[N-acetyl-alpha-D-glucosaminyl-(1-&gt;4)]-N-acetyl-alpha-D-muramoyl-L-alanyl-D-glutamyl-meso-2,6-diaminopimeloyl-D-alanyl-D-alanine + UDP + H(+). The protein operates within cell wall biogenesis; peptidoglycan biosynthesis. Functionally, cell wall formation. Catalyzes the transfer of a GlcNAc subunit on undecaprenyl-pyrophosphoryl-MurNAc-pentapeptide (lipid intermediate I) to form undecaprenyl-pyrophosphoryl-MurNAc-(pentapeptide)GlcNAc (lipid intermediate II). This chain is UDP-N-acetylglucosamine--N-acetylmuramyl-(pentapeptide) pyrophosphoryl-undecaprenol N-acetylglucosamine transferase, found in Shewanella oneidensis (strain ATCC 700550 / JCM 31522 / CIP 106686 / LMG 19005 / NCIMB 14063 / MR-1).